The primary structure comprises 186 residues: Large ribosomal subunit protein uL6 (186 aa).

The protein belongs to the universal ribosomal protein uL6 family. In terms of assembly, part of the 50S ribosomal subunit.

Its function is as follows. This protein binds to the 23S rRNA, and is important in its secondary structure. It is located near the subunit interface in the base of the L7/L12 stalk, and near the tRNA binding site of the peptidyltransferase center. This is Large ribosomal subunit protein uL6 from Hyperthermus butylicus (strain DSM 5456 / JCM 9403 / PLM1-5).